The primary structure comprises 307 residues: Ribosomal RNA small subunit methyltransferase A (307 aa).

The S-adenosyl-L-methionine site is built by asparagine 35, valine 37, glycine 62, glutamate 83, aspartate 113, and asparagine 136.

The protein belongs to the class I-like SAM-binding methyltransferase superfamily. rRNA adenine N(6)-methyltransferase family. RsmA subfamily.

The protein resides in the cytoplasm. The catalysed reaction is adenosine(1518)/adenosine(1519) in 16S rRNA + 4 S-adenosyl-L-methionine = N(6)-dimethyladenosine(1518)/N(6)-dimethyladenosine(1519) in 16S rRNA + 4 S-adenosyl-L-homocysteine + 4 H(+). Functionally, specifically dimethylates two adjacent adenosines (A1518 and A1519) in the loop of a conserved hairpin near the 3'-end of 16S rRNA in the 30S particle. May play a critical role in biogenesis of 30S subunits. This is Ribosomal RNA small subunit methyltransferase A from Bifidobacterium longum subsp. infantis (strain ATCC 15697 / DSM 20088 / JCM 1222 / NCTC 11817 / S12).